A 353-amino-acid polypeptide reads, in one-letter code: Dihydroorotate dehydrogenase (quinone) (353 aa).

Residues 66 to 70 (AGFDK) and Thr-90 each bind FMN. Lys-70 serves as a coordination point for substrate. Residue 115-119 (NRMGF) participates in substrate binding. FMN contacts are provided by Asn-143 and Asn-176. Asn-176 contacts substrate. Catalysis depends on Ser-179, which acts as the Nucleophile. Substrate is bound at residue Asn-181. FMN is bound by residues Lys-212 and Thr-240. 241 to 242 (NT) lines the substrate pocket. FMN-binding positions include Gly-264, Gly-293, and 314–315 (YT).

The protein belongs to the dihydroorotate dehydrogenase family. Type 2 subfamily. As to quaternary structure, monomer. FMN serves as cofactor.

The protein localises to the cell membrane. It carries out the reaction (S)-dihydroorotate + a quinone = orotate + a quinol. It participates in pyrimidine metabolism; UMP biosynthesis via de novo pathway; orotate from (S)-dihydroorotate (quinone route): step 1/1. Its function is as follows. Catalyzes the conversion of dihydroorotate to orotate with quinone as electron acceptor. This chain is Dihydroorotate dehydrogenase (quinone), found in Mycolicibacterium vanbaalenii (strain DSM 7251 / JCM 13017 / BCRC 16820 / KCTC 9966 / NRRL B-24157 / PYR-1) (Mycobacterium vanbaalenii).